A 954-amino-acid polypeptide reads, in one-letter code: Valine--tRNA ligase (954 aa).

Residues 48 to 58 (PNVTGSLHMGH) carry the 'HIGH' region motif. Positions 560–564 (KMSKS) match the 'KMSKS' region motif. Lys-563 provides a ligand contact to ATP. Positions 883–953 (AGFINKEAEL…IQEQYKAIEA (71 aa)) form a coiled coil.

This sequence belongs to the class-I aminoacyl-tRNA synthetase family. ValS type 1 subfamily. Monomer.

The protein resides in the cytoplasm. The enzyme catalyses tRNA(Val) + L-valine + ATP = L-valyl-tRNA(Val) + AMP + diphosphate. Its function is as follows. Catalyzes the attachment of valine to tRNA(Val). As ValRS can inadvertently accommodate and process structurally similar amino acids such as threonine, to avoid such errors, it has a 'posttransfer' editing activity that hydrolyzes mischarged Thr-tRNA(Val) in a tRNA-dependent manner. The protein is Valine--tRNA ligase of Haemophilus influenzae (strain 86-028NP).